A 157-amino-acid chain; its full sequence is Monooxygenase CPUR_05417 (157 aa).

Belongs to the avfA family.

It functions in the pathway secondary metabolite biosynthesis. In terms of biological role, monooxygenase; part of the ergochrome gene cluster responsible for the typical purple-black color of the ergot sclerotia. The ergochrome gene cluster produces several ergot pigments including the yellow ergochrome secalonic acid and its derivatives, as well as the red anthraquinones endocrocin and clavorubin. The pathway begins with the synthesis of atrochrysone thioester by the polyketide synthase (PKS) CPUR_05437. The atrochrysone carboxyl ACP thioesterase CPUR_05436 then breaks the thioester bond and releases the atrochrysone carboxylic acid from CPUR_05437. The atrochrysone carboxylic acid is then converted to atrochrysone which is further transformed into emodin anthrone. The next step is performed by the anthrone oxygenase CPUR_05434 that catalyzes the oxidation of emodinanthrone to emodin. Emodin is further modified to yield monodictyphenone via several steps involving CPUR_05427, CPUR_05428, CPUR_05429 and CPUR_05430. The short chain dehydrogenase/reductase CPUR_05418 then catalyzes the C-5 ketoreduction to give the xanthone skeleton of the monomeric units. Ergochromes formation requires further dimerization steps of different xanthone units, probably catalyzed by the cytochrome P450 monooxygenase CPUR_05419. CPUR_05425, CPUR_05426 and CPUR_05431 are unique to Claviceps, thus it is likely that they are involved in further modification of xanthone units or in their dimerization. The yellow ergochromes and the red anthraquinone pigments endocrocin and clavorubin are products from the same PKS derived precursors and the latter are likely shunt products in the pathway of xanthone biosynthesis. It is proposed that atrochrysone carboxylic acid released from the PKS CPUR_05437 can also be converted to endocrocin anthrone which is further oxidized into endocrocin by CPUR_05435. Endocrocin could be then modified to clavorubin, possibly by CPUR_05423 and CPUR_05431. Clavorubin is the principal anthraquinone metabolite produced by the cluster with a much higher yield compared to endocrocin. This chain is Monooxygenase CPUR_05417, found in Claviceps purpurea (strain 20.1) (Ergot fungus).